Here is a 336-residue protein sequence, read N- to C-terminus: 4-hydroxy-2-oxovalerate aldolase (336 aa).

Residues Pro4 to Met254 enclose the Pyruvate carboxyltransferase domain. Position 12–13 (Arg12–Asp13) interacts with substrate. Position 13 (Asp13) interacts with Mn(2+). The Proton acceptor role is filled by His16. Positions 166 and 193 each coordinate substrate. Mn(2+)-binding residues include His193 and His195. Residue Tyr284 participates in substrate binding.

This sequence belongs to the 4-hydroxy-2-oxovalerate aldolase family.

It catalyses the reaction (S)-4-hydroxy-2-oxopentanoate = acetaldehyde + pyruvate. In Roseiflexus castenholzii (strain DSM 13941 / HLO8), this protein is 4-hydroxy-2-oxovalerate aldolase.